Reading from the N-terminus, the 642-residue chain is Threonine--tRNA ligase (642 aa).

One can recognise a TGS domain in the interval 1-58 (MQVAGKELEVQQGALCGEVLKEALSKKQFKNVVVAKCGDTLLDLTTTVPADCTDLEPV). Residues 239–530 (DHRKLGTQLD…LLEHTGGALP (292 aa)) form a catalytic region. Zn(2+) is bound by residues Cys331, His382, and His507.

Belongs to the class-II aminoacyl-tRNA synthetase family. As to quaternary structure, homodimer. It depends on Zn(2+) as a cofactor.

It localises to the cytoplasm. It carries out the reaction tRNA(Thr) + L-threonine + ATP = L-threonyl-tRNA(Thr) + AMP + diphosphate + H(+). Its function is as follows. Catalyzes the attachment of threonine to tRNA(Thr) in a two-step reaction: L-threonine is first activated by ATP to form Thr-AMP and then transferred to the acceptor end of tRNA(Thr). Also edits incorrectly charged L-seryl-tRNA(Thr). In Maridesulfovibrio salexigens (strain ATCC 14822 / DSM 2638 / NCIMB 8403 / VKM B-1763) (Desulfovibrio salexigens), this protein is Threonine--tRNA ligase.